The following is a 292-amino-acid chain: E3 ubiquitin-protein ligase RNF144A (292 aa).

The TRIAD supradomain stretch occupies residues 16 to 236 (PLVSCKLCLG…YDKGPCRNKL (221 aa)). Cys20, Cys23, Cys43, Cys46, Cys111, Cys116, Cys135, Cys138, Cys143, Cys146, His151, Cys156, Cys185, and Cys188 together coordinate Zn(2+). The segment at 20–70 (CKLCLGEYPVEQMTTIAQCQCIFCTLCLKQYVELLIKEGLETAISCPDAAC) adopts an RING-type 1 zinc-finger fold. Residues 91-156 (QRYKKLQFER…KASWHPGQGC (66 aa)) form an IBR-type zinc finger. Residues 185–214 (CPKCKVYIERDEGCAQMMCKNCKHAFCWYC) form an RING-type 2; atypical zinc finger. Cys198 is a catalytic residue. Residues Cys203, Cys206, Cys211, Cys214, His226, and Cys232 each contribute to the Zn(2+) site. Residues 250–270 (VVGIFAGFGLLLLVASPFLLL) form a helical membrane-spanning segment.

The protein belongs to the RBR family. RNF144 subfamily. As to quaternary structure, self-associates. Interacts with UBE2L3. Auto-ubiquitinated.

The protein resides in the cell membrane. It is found in the cytoplasmic vesicle membrane. It localises to the endosome membrane. Its subcellular location is the endoplasmic reticulum membrane. The catalysed reaction is [E2 ubiquitin-conjugating enzyme]-S-ubiquitinyl-L-cysteine + [acceptor protein]-L-lysine = [E2 ubiquitin-conjugating enzyme]-L-cysteine + [acceptor protein]-N(6)-ubiquitinyl-L-lysine.. It participates in protein modification; protein ubiquitination. Its function is as follows. E3 ubiquitin-protein ligase which accepts ubiquitin from E2 ubiquitin-conjugating enzymes UBE2L3 and UBE2L6 in the form of a thioester and then directly transfers the ubiquitin to targeted substrates. Mediates the ubiquitination and degradation of the DNA damage kinase PRKDC during DNA damage. Positively regulates DNA virus or exogenous cytosolic DNA-triggered innate immune response by mediating STING1 ubiquitination and increasing its 'Lys-6'-linked ubiquitination and translocation from the endoplasmic reticulum to the Golgi leading to downstream signaling pathways. Plays a positive role in EGF-dependent cell proliferation by prolonging EGF/EGFR signaling during EGF stimulation through EGFR ubiquitination. Increases ERK activity independently of EGFR signaling by promoting polyubiquitination and subsequent degradation of VRK3 in the cytosol. This chain is E3 ubiquitin-protein ligase RNF144A (RNF144A), found in Homo sapiens (Human).